A 270-amino-acid polypeptide reads, in one-letter code: Putative hydro-lyase Reut_A2449 (270 aa).

It belongs to the D-glutamate cyclase family.

The polypeptide is Putative hydro-lyase Reut_A2449 (Cupriavidus pinatubonensis (strain JMP 134 / LMG 1197) (Cupriavidus necator (strain JMP 134))).